A 117-amino-acid polypeptide reads, in one-letter code: Large ribosomal subunit protein bL20c (117 aa).

Belongs to the bacterial ribosomal protein bL20 family.

The protein localises to the plastid. Its subcellular location is the chloroplast. Binds directly to 23S ribosomal RNA and is necessary for the in vitro assembly process of the 50S ribosomal subunit. It is not involved in the protein synthesizing functions of that subunit. This Thalassiosira pseudonana (Marine diatom) protein is Large ribosomal subunit protein bL20c.